A 423-amino-acid chain; its full sequence is Riboflavin biosynthesis protein RibBA (423 aa).

The DHBP synthase stretch occupies residues 1–204; that stretch reads MTRLDSVERA…IADLIEWRRK (204 aa). Residues 28–29, Asp33, 141–145, and Glu165 each bind D-ribulose 5-phosphate; these read RE and RPGHT. Glu29 is a Mg(2+) binding site. His144 contacts Mg(2+). The interval 205 to 423 is GTP cyclohydrolase II; sequence HEKHIARVAE…AVPGEFGGAV (219 aa). GTP is bound at residue 259–263; that stretch reads RVHSE. Zn(2+) is bound by residues Cys264, Cys275, and Cys277. GTP-binding positions include Gln280, 303 to 305, and Thr325; that span reads EGR. Asp337 serves as the catalytic Proton acceptor; for GTP cyclohydrolase activity. Arg339 (nucleophile; for GTP cyclohydrolase activity) is an active-site residue. Thr360 and Lys365 together coordinate GTP.

This sequence in the N-terminal section; belongs to the DHBP synthase family. In the C-terminal section; belongs to the GTP cyclohydrolase II family. The cofactor is Mg(2+). It depends on Mn(2+) as a cofactor. Zn(2+) is required as a cofactor.

The catalysed reaction is D-ribulose 5-phosphate = (2S)-2-hydroxy-3-oxobutyl phosphate + formate + H(+). It carries out the reaction GTP + 4 H2O = 2,5-diamino-6-hydroxy-4-(5-phosphoribosylamino)-pyrimidine + formate + 2 phosphate + 3 H(+). It functions in the pathway cofactor biosynthesis; riboflavin biosynthesis; 2-hydroxy-3-oxobutyl phosphate from D-ribulose 5-phosphate: step 1/1. Its pathway is cofactor biosynthesis; riboflavin biosynthesis; 5-amino-6-(D-ribitylamino)uracil from GTP: step 1/4. In terms of biological role, catalyzes the conversion of D-ribulose 5-phosphate to formate and 3,4-dihydroxy-2-butanone 4-phosphate. Its function is as follows. Catalyzes the conversion of GTP to 2,5-diamino-6-ribosylamino-4(3H)-pyrimidinone 5'-phosphate (DARP), formate and pyrophosphate. This is Riboflavin biosynthesis protein RibBA from Mycolicibacterium gilvum (strain PYR-GCK) (Mycobacterium gilvum (strain PYR-GCK)).